A 117-amino-acid polypeptide reads, in one-letter code: Ig heavy chain V region UPC10 (117 aa).

The 116-residue stretch at 1-116 (EVKLLESGGG…WGQVTTLTVS (116 aa)) folds into the Ig-like domain.

The protein is Ig heavy chain V region UPC10 of Mus musculus (Mouse).